A 289-amino-acid chain; its full sequence is Nucleotide-binding protein Francci3_1634 (289 aa).

13 to 20 (GLSGAGRS) contacts ATP. GTP is bound at residue 64–67 (DVRG).

This sequence belongs to the RapZ-like family.

Functionally, displays ATPase and GTPase activities. This Frankia casuarinae (strain DSM 45818 / CECT 9043 / HFP020203 / CcI3) protein is Nucleotide-binding protein Francci3_1634.